Here is a 515-residue protein sequence, read N- to C-terminus: MSGYTAFFNNFLGKSPNWYKLSIIVFLILNPILYFLISPFIAGWCLVIEFIFTLAMALKCYPLQPGGLLAFEAIAIGMTSPAHVKAEIMASFEVILLLMFMVAGIYFMKQLLLFAFTRLLITVRSKIVLSLSFCLSAAFLSAFLDALTVVAVIISVVMGFYGVYHKVASGNNFDDSTDITNDEKIKKDQQVLEQFRSFLRSLMMHAGVGTALGGVMTLVGEPQNLIIAEQASWGFGEFFIRMAPVTVPVLICGLITCVMIEKMNIFGYGDKLPRKVWGILAKFNRAQQQKMNRQERQKLIIQGIIGIWLVCGLAFHLAAVGLIGLSVIVLTTAFCGITSESTIGKSFQESLPFCALLVVFFSVVAVIIDQHLFGPIINYVLSASESTQLLLFYGFNGLLSAISDNVFVATVYINEAKNALHAGIISLEQFELLAVAINTGTNLPSVATPNGQAAFLFLLTSSLAPLIRLSYGKMVYMALPYTIVLTVVGLLAVEYILPGATKYFSSLGWITALPV.

Transmembrane regions (helical) follow at residues 23–43 (IIVF…FIAG), 44–64 (WCLV…YPLQ), 88–108 (IMAS…IYFM), 119–139 (LLIT…SAAF), 143–163 (FLDA…FYGV), 202–222 (LMMH…VGEP), 238–258 (FFIR…ITCV), 303–323 (GIIG…VGLI), 324–344 (GLSV…STIG), 357–377 (LVVF…GPII), 389–409 (LLLF…VFVA), 447–467 (ATPN…APLI), and 477–497 (MALP…EYIL).

This sequence belongs to the NhaB Na(+)/H(+) (TC 2.A.34) antiporter family.

The protein localises to the cell inner membrane. The enzyme catalyses 2 Na(+)(in) + 3 H(+)(out) = 2 Na(+)(out) + 3 H(+)(in). Functionally, na(+)/H(+) antiporter that extrudes sodium in exchange for external protons. The chain is Na(+)/H(+) antiporter NhaB from Mannheimia succiniciproducens (strain KCTC 0769BP / MBEL55E).